Reading from the N-terminus, the 123-residue chain is Small ribosomal subunit protein uS12 (123 aa).

Positions 1 to 21 are disordered; that stretch reads MPTIEQLVRKGRQAKPKKSKT. The span at 9–20 shows a compositional bias: basic residues; the sequence is RKGRQAKPKKSK. Asp89 carries the 3-methylthioaspartic acid modification.

Belongs to the universal ribosomal protein uS12 family. Part of the 30S ribosomal subunit. Contacts proteins S8 and S17. May interact with IF1 in the 30S initiation complex.

Its function is as follows. With S4 and S5 plays an important role in translational accuracy. In terms of biological role, interacts with and stabilizes bases of the 16S rRNA that are involved in tRNA selection in the A site and with the mRNA backbone. Located at the interface of the 30S and 50S subunits, it traverses the body of the 30S subunit contacting proteins on the other side and probably holding the rRNA structure together. The combined cluster of proteins S8, S12 and S17 appears to hold together the shoulder and platform of the 30S subunit. This chain is Small ribosomal subunit protein uS12, found in Bifidobacterium longum subsp. infantis (strain ATCC 15697 / DSM 20088 / JCM 1222 / NCTC 11817 / S12).